Here is a 450-residue protein sequence, read N- to C-terminus: Envelope glycoprotein M (450 aa).

The Intravirion segment spans residues 1–31 (MARRGAAVAEEPLLPSSGIVGIGPIEGINWR). The chain crosses the membrane as a helical span at residues 32-52 (TWLVQVFCFALTTSVLFITLV). Over 53 to 101 (TASLPQTGYPCFYGSLVDYTQKNHSVVDGVWMRQIAGGVAPTLFLETTS) the chain is Virion surface. Residues 102 to 122 (LVAFLYYTTLVLVAISFYLII) traverse the membrane as a helical segment. Residues 123-153 (SAVLVRRYARGKECTAVAGCTRPTTTLIASH) lie on the Intravirion side of the membrane. The helical transmembrane segment at 154-174 (VTLVLGTLATWLLQVVILLLS) threads the bilayer. Residues 175–178 (HKQA) are Virion surface-facing. A helical membrane pass occupies residues 179–199 (VLGAAVYVVHFVSLVFFCMSF). The Intravirion segment spans residues 200–236 (SGLGTASAQYSSNLRILKTNLPALHKMAGPGRAVMTN). A helical transmembrane segment spans residues 237 to 257 (LGMGMLGISLPILSLMLGIIL). Over 258 to 270 (ANSFHITLWQTVT) the chain is Virion surface. The chain crosses the membrane as a helical span at residues 271 to 291 (VAVGVFVALGLMFLIIVELIV). Over 292–294 (SHY) the chain is Intravirion. A helical transmembrane segment spans residues 295 to 315 (VHVLVGPALAVLVASSTLAVA). The Virion surface portion of the chain corresponds to 316–334 (THSYFVHFHAMVSVQAPNL). Residues 335-355 (ATASKAIVGIMAVISIIMLVV) form a helical membrane-spanning segment. Over 356 to 450 (RLVRAIMFHK…PERSHRREYR (95 aa)) the chain is Intravirion.

It belongs to the herpesviridae glycoprotein M family. Interacts (via N-terminus) with gN (via N-terminus). The gM-gN heterodimer forms the gCII complex.

Its subcellular location is the virion membrane. It is found in the host Golgi apparatus. The protein localises to the host trans-Golgi network. It localises to the host endosome membrane. The protein resides in the host nucleus inner membrane. In terms of biological role, envelope glycoprotein important for virion assembly and egress. Plays a role in the correct incorporation of gH-gL into virion membrane. Directs the glycoprotein N (gN) to the host trans-Golgi network. The polypeptide is Envelope glycoprotein M (Equus caballus (Horse)).